A 466-amino-acid chain; its full sequence is GTPase Der (466 aa).

EngA-type G domains are found at residues 3-166 and 177-350; these read PVIA…PEIP and IKIA…QSAT. Residues 9 to 16, 56 to 60, 118 to 121, 183 to 190, 230 to 234, and 295 to 298 contribute to the GTP site; these read GRPNVGKS, DTGGI, NKID, DTAGV, and NKWD. Positions 351-435 constitute a KH-like domain; the sequence is DRFSTNYLTR…PIRIEFRTTD (85 aa). Positions 442-466 are disordered; that stretch reads KKSMTRQQFIQKRRKEERDRNNPRR. Residues 455 to 466 are compositionally biased toward basic and acidic residues; it reads RKEERDRNNPRR.

It belongs to the TRAFAC class TrmE-Era-EngA-EngB-Septin-like GTPase superfamily. EngA (Der) GTPase family. As to quaternary structure, associates with the 50S ribosomal subunit.

GTPase that plays an essential role in the late steps of ribosome biogenesis. The sequence is that of GTPase Der from Cellvibrio japonicus (strain Ueda107) (Pseudomonas fluorescens subsp. cellulosa).